The chain runs to 104 residues: Large ribosomal subunit protein uL24 (104 aa).

This sequence belongs to the universal ribosomal protein uL24 family. Part of the 50S ribosomal subunit.

Functionally, one of two assembly initiator proteins, it binds directly to the 5'-end of the 23S rRNA, where it nucleates assembly of the 50S subunit. One of the proteins that surrounds the polypeptide exit tunnel on the outside of the subunit. This Shigella dysenteriae serotype 1 (strain Sd197) protein is Large ribosomal subunit protein uL24.